The following is a 1396-amino-acid chain: DNA-directed RNA polymerase subunit beta' (1396 aa).

Cys71, Cys73, Cys86, and Cys89 together coordinate Zn(2+). Mg(2+) is bound by residues Asp462, Asp464, and Asp466. Zn(2+) contacts are provided by Cys810, Cys884, Cys891, and Cys894. Positions 1372-1382 (DEQLAQQREDA) are enriched in basic and acidic residues. A disordered region spans residues 1372–1396 (DEQLAQQREDAMEPLPAEIALSDAE).

This sequence belongs to the RNA polymerase beta' chain family. In terms of assembly, the RNAP catalytic core consists of 2 alpha, 1 beta, 1 beta' and 1 omega subunit. When a sigma factor is associated with the core the holoenzyme is formed, which can initiate transcription. It depends on Mg(2+) as a cofactor. Zn(2+) is required as a cofactor.

The enzyme catalyses RNA(n) + a ribonucleoside 5'-triphosphate = RNA(n+1) + diphosphate. In terms of biological role, DNA-dependent RNA polymerase catalyzes the transcription of DNA into RNA using the four ribonucleoside triphosphates as substrates. The chain is DNA-directed RNA polymerase subunit beta' from Caulobacter vibrioides (strain ATCC 19089 / CIP 103742 / CB 15) (Caulobacter crescentus).